The sequence spans 267 residues: Glucosamine-6-phosphate deaminase (267 aa).

Residue aspartate 76 is the Proton acceptor; for enolization step of the active site. Aspartate 145 acts as the For ring-opening step in catalysis. The active-site Proton acceptor; for ring-opening step is histidine 147. Glutamate 152 acts as the For ring-opening step in catalysis.

The protein belongs to the glucosamine/galactosamine-6-phosphate isomerase family. As to quaternary structure, homohexamer.

Its subcellular location is the cytoplasm. The enzyme catalyses alpha-D-glucosamine 6-phosphate + H2O = beta-D-fructose 6-phosphate + NH4(+). The protein operates within nucleotide-sugar biosynthesis; UDP-N-acetyl-alpha-D-glucosamine biosynthesis; alpha-D-glucosamine 6-phosphate from D-fructose 6-phosphate: step 1/1. Functionally, catalyzes the reversible conversion of alpha-D-glucosamine 6-phosphate (GlcN-6P) into beta-D-fructose 6-phosphate (Fru-6P) and ammonium ion, a regulatory reaction step in de novo uridine diphosphate-N-acetyl-alpha-D-glucosamine (UDP-GlcNAc) biosynthesis via hexosamine pathway. This is Glucosamine-6-phosphate deaminase from Dictyostelium discoideum (Social amoeba).